The primary structure comprises 174 residues: Secretory-abundant heat soluble protein 68234 (174 aa).

A signal peptide spans 1 to 19; the sequence is MARFLVALALFGVVAMTAA. The SAHS-c1 stretch occupies residues 26–57; sequence EWSGKPWLGKFVAEVTDKSENWEAFVDALGLP. The interval 72–100 is SAHS-c2; that stretch reads YKQGDHYHHIFALPDKNFEKDIEFTLGQE. The tract at residues 113 to 162 is SAHS-c3; the sequence is KYSEDGEKLVADVSIPTKGKTIRSEYEVQGDQLIKTYKTGDIVAKKWFKK.

It belongs to the Secretory-abundant heat soluble protein (SAHS) family.

Its subcellular location is the secreted. In terms of biological role, secreted heat soluble protein acting as a molecular shield in water-deficient condition. Tardigrade-specific intrinsically disordered proteins (TDPs) are essential for desiccation tolerance by forming non-crystalline amorphous solids upon desiccation, and this vitrified state mirrors their protective capabilities. This is Secretory-abundant heat soluble protein 68234 from Hypsibius exemplaris (Freshwater tardigrade).